The sequence spans 640 residues: Protein SPT10 (640 aa).

The tract at residues 1-30 is disordered; sequence MLNQHTSSVPDDEHLQMAHQNSSSEVRNEA. Residues 121-259 enclose the N-acetyltransferase domain; the sequence is LDYSMDTEAD…AGILKGFDVP (139 aa). Residues 534–565 are disordered; it reads PHLTNNESQDHANPVNRDERDMNHSVPDLDRN. A compositionally biased stretch (basic and acidic residues) spans 549–565; that stretch reads NRDERDMNHSVPDLDRN.

Required for normal transcription at a number of loci in yeast. Affects transcription at Ty1 elements, at PHO5, STE6 and ADH2. The polypeptide is Protein SPT10 (SPT10) (Saccharomyces cerevisiae (strain ATCC 204508 / S288c) (Baker's yeast)).